We begin with the raw amino-acid sequence, 451 residues long: tRNA modification GTPase MnmE (451 aa).

3 residues coordinate (6S)-5-formyl-5,6,7,8-tetrahydrofolate: Arg-28, Glu-85, and Lys-124. The TrmE-type G domain maps to 220 to 373 (GLYTVLVGPP…LKTRLRTLLL (154 aa)). Asn-230 provides a ligand contact to K(+). Residues 230-235 (NVGKSS), 249-255 (TDVPGTT), and 274-277 (DTAG) contribute to the GTP site. Ser-234 lines the Mg(2+) pocket. 3 residues coordinate K(+): Thr-249, Val-251, and Thr-254. Thr-255 contacts Mg(2+). A (6S)-5-formyl-5,6,7,8-tetrahydrofolate-binding site is contributed by Lys-451.

It belongs to the TRAFAC class TrmE-Era-EngA-EngB-Septin-like GTPase superfamily. TrmE GTPase family. In terms of assembly, homodimer. Heterotetramer of two MnmE and two MnmG subunits. It depends on K(+) as a cofactor.

The protein resides in the cytoplasm. In terms of biological role, exhibits a very high intrinsic GTPase hydrolysis rate. Involved in the addition of a carboxymethylaminomethyl (cmnm) group at the wobble position (U34) of certain tRNAs, forming tRNA-cmnm(5)s(2)U34. The chain is tRNA modification GTPase MnmE from Xylella fastidiosa (strain Temecula1 / ATCC 700964).